The primary structure comprises 268 residues: Microtubule-associated protein RP/EB family member 1 (268 aa).

An N-acetylalanine modification is found at Ala-2. The Calponin-homology (CH) domain maps to Asn-14 to Asp-116. N6-crotonyllysine is present on Lys-66. Residue Tyr-124 is modified to Phosphotyrosine. Positions Tyr-124–Tyr-268 are interaction with MTUS2/TIP150. Residues Leu-146–Val-180 are disordered. Residues Gly-154–Thr-170 are compositionally biased toward polar residues. Ser-155 is modified (phosphoserine). The 71-residue stretch at Gly-185–Ile-255 folds into the EB1 C-terminal domain. Residues Thr-206–Glu-211 form an interaction with APC region. Residues Glu-208–Tyr-268 form a DCTN1-binding region. At Lys-220 the chain carries N6-acetyllysine. Residues Lys-220–Ile-242 form an APC-binding region. Residues Glu-232–Ile-255 form an interaction with SKA1 region.

Belongs to the MAPRE family. In terms of assembly, homodimer. Heterodimer with MAPRE3. Interacts (via C-terminal residues 206-211) with APC (via C-terminal residues 2674-2845); the interaction inhibits association with and bundling of F-actin. Interacts with DCTN1, DIAPH1 and DIAPH2. Interacts with DCTN2, TERF1 and dynein intermediate chain. Interacts with CLASP2, DST, KIF2C and STIM1; probably required for their targeting to the growing microtubule plus ends. Interacts with MTUS2; interaction is direct and probably targets MTUS2 to microtubules. Interacts (via C-terminus) with SKA1 (via SXIP motif); the interaction is direct and stabilizes the kinetochore-microtubule attachment of the SKA1 complex. Interacts with APC2. Interacts with CLASP1. Interacts (via C-terminus) with CLIP1. Interacts with SLAIN2 and SLAIN1. Interacts with MACF1. Interacts with KIF18B; this interaction is required for efficient accumulation of KIF18B at microtubule plus ends. Interacts with MISP. Interacts with RABL2/RABL2A; binds preferentially to GTP-bound RABL2. Interacts with KCNAB2. Interacts with KNSTRN. Interacts with NCKAP5L. Interacts with AKAP9. Interacts with PDE4DIP isoform 2/MMG8/SMYLE; this interaction is required for its recruitment to the Golgi apparatus. May form a pericentrosomal complex with AKAP9, CDK5RAP2 and PDE4DIP isoform 2/MMG8/SMYLE; within this complex, MAPRE1 binding to CDK5RAP2 may be mediated by PDE4DIP. Contrary to other mammalian species, does not interact with CDK5RAP2, possibly due to the lack of conservation of the MAPRE1-binding motif in mouse CDK5RAP2. Interacts with AKNA. Interacts with GAS2L1, GAS2L2, and GAS2L3. Interacts with RARRES1 and AGBL2. Post-translationally, acetylation at Lys-220 by KAT2B/PCAF promotes dynamic kinetochore-microtubule interactions in early mitosis. In terms of processing, crotonylated by KAT5 during mitosis, promoting astral microtubule plasticity and dynamic connection between astral microtubules and the cortex during mitotic chromosome segregation, thereby ensuring accurate spindle positioning in mitosis. Decrotonylated by HDAC3. In terms of tissue distribution, expressed within the midpiece of sperm tail (at protein level).

It is found in the cytoplasm. It localises to the cytoskeleton. The protein resides in the microtubule organizing center. Its subcellular location is the centrosome. The protein localises to the spindle. It is found in the spindle pole. Functionally, plus-end tracking protein (+TIP) that binds to the plus-end of microtubules and regulates the dynamics of the microtubule cytoskeleton. Recruits other +TIP proteins to microtubules by binding to a conserved Ser-X-Leu-Pro (SXLP) motif in their polypeptide chains. Promotes cytoplasmic microtubule nucleation and elongation. Involved in mitotic spindle positioning by stabilizing microtubules and promoting dynamic connection between astral microtubules and the cortex during mitotic chromosome segregation. Assists chromosome alignment in metaphase by recruiting the SKA complex to the spindle and stabilizing its interactions with microtubule bundles (K-fibers). Also acts as a regulator of minus-end microtubule organization: interacts with the complex formed by AKAP9 and PDE4DIP, leading to recruit CAMSAP2 to the Golgi apparatus, thereby tethering non-centrosomal minus-end microtubules to the Golgi, an important step for polarized cell movement. Promotes elongation of CAMSAP2-decorated microtubule stretches on the minus-end of microtubules. Acts as a regulator of autophagosome transport via interaction with CAMSAP2. Functions downstream of Rho GTPases and DIAPH1 in stable microtubule formation. May play a role in cell migration. The protein is Microtubule-associated protein RP/EB family member 1 (Mapre1) of Mus musculus (Mouse).